The following is a 267-amino-acid chain: Neural/ectodermal development factor IMP-L2 (267 aa).

The N-terminal stretch at 1–25 (MEAKMNLHVCALALLLFGSIATVRG) is a signal peptide. Ig-like C2-type domains are found at residues 48-149 (PRNR…KTIY) and 174-260 (PRII…TFVY). 2 disulfide bridges follow: Cys-80–Cys-139 and Cys-195–Cys-244.

As to expression, detected in several sites including the ventral neuroectoderm, the tracheal pits, the pharynx and esophagus, and specific neuronal cell bodies, where it is primarily expressed.

The protein localises to the secreted. The protein resides in the extracellular space. Essential developmental role during embryogenesis, in particular the normal development of the nervous system. May be involved in some aspect of cell adhesion. This is Neural/ectodermal development factor IMP-L2 (ImpL2) from Drosophila melanogaster (Fruit fly).